We begin with the raw amino-acid sequence, 260 residues long: (R)-2-hydroxyglutaryl-CoA dehydratase activating ATPase (260 aa).

12-16 contributes to the ATP binding site; it reads STASK. [4Fe-4S] cluster-binding residues include Cys-127 and Cys-166. Positions 220 and 243 each coordinate ATP.

It belongs to the HgdC family. Homodimer. Requires [4Fe-4S] cluster as cofactor. The cofactor is Mg(2+).

It catalyses the reaction ATP + H2O = ADP + phosphate + H(+). Its pathway is amino-acid degradation; L-glutamate degradation via hydroxyglutarate pathway; crotonoyl-CoA from L-glutamate: step 4/5. Inactivated by exposure to air within less than 15 minutes. Functionally, involved in the fermentation of L-glutamate via the hydroxyglutarate pathway. HgdC (CompA) has a very low ATPase activity, whose the role is to activate dehydratase HgdA-HgdB complex and then maintain an appropriate redox state via an ATP-dependent electron transfer. The dehydratase requires only catalytic amounts of ATP and substoichiometric amounts of HgdC (CompA) to be functional. This Acidaminococcus fermentans (strain ATCC 25085 / DSM 20731 / CCUG 9996 / CIP 106432 / VR4) protein is (R)-2-hydroxyglutaryl-CoA dehydratase activating ATPase.